A 602-amino-acid polypeptide reads, in one-letter code: Rho family-interacting cell polarization regulator 2 (602 aa).

The interval 46-73 (KKPQAKVKKMHNLGHKNSTTPKEPQPKR) is disordered. A compositionally biased stretch (basic residues) spans 48 to 59 (PQAKVKKMHNLG). Positions 83–112 (NGLDEYLEVHQTELDKLTAQLKDMRRNSRL) form a coiled coil. The interval 173-421 (RESLTEINRS…TTAATQHRAL (249 aa)) is necessary for interaction with NCAM and myoblast protrusion formation. Residues 384–474 (GDLPYEDRVP…RSEVCQKPSN (91 aa)) are disordered. The segment covering 403–416 (AHVSSSPDITTAAT) has biased composition (polar residues). Over residues 423–437 (SSESSSPDCSSSDSC) the composition is skewed to low complexity.

It belongs to the RIPOR family. In terms of assembly, homooligomer; homooligomerization is regulated by RHOC and leads to the formation of concatemers through the association of N- and C-termini. Interacts with NCAM.

The protein localises to the cytoplasm. Its subcellular location is the cytoskeleton. The protein resides in the cell projection. It is found in the filopodium. It localises to the apical cell membrane. The protein localises to the stereocilium. Its subcellular location is the stereocilium membrane. In terms of biological role, acts as an inhibitor of the small GTPase RHOA and plays several roles in the regulation of myoblast and hair cell differentiation, lymphocyte T proliferation and neutrophil polarization. Plays a role in fetal mononuclear myoblast differentiation by promoting filopodia and myotube formation. Maintains naive T lymphocytes in a quiescent state and prevents chemokine-induced T lymphocyte responses, such as cell adhesion, polarization and migration. Involved also in the regulation of neutrophil polarization, chemotaxis and adhesion. Required for normal development of inner and outer hair cell stereocilia within the cochlea of the inner ear. Plays a role for maintaining the structural organization of the basal domain of stereocilia. Involved in mechanosensory hair cell function. Required for normal hearing. The polypeptide is Rho family-interacting cell polarization regulator 2 (Gallus gallus (Chicken)).